The sequence spans 260 residues: Triosephosphate isomerase (260 aa).

N11 to K13 provides a ligand contact to substrate. The active-site Electrophile is H103. The Proton acceptor role is filled by E175. Residues G181, S220, and G241–G242 contribute to the substrate site.

Belongs to the triosephosphate isomerase family. In terms of assembly, homodimer.

The protein localises to the cytoplasm. The enzyme catalyses D-glyceraldehyde 3-phosphate = dihydroxyacetone phosphate. Its pathway is carbohydrate biosynthesis; gluconeogenesis. It functions in the pathway carbohydrate degradation; glycolysis; D-glyceraldehyde 3-phosphate from glycerone phosphate: step 1/1. Its function is as follows. Involved in the gluconeogenesis. Catalyzes stereospecifically the conversion of dihydroxyacetone phosphate (DHAP) to D-glyceraldehyde-3-phosphate (G3P). This Shewanella loihica (strain ATCC BAA-1088 / PV-4) protein is Triosephosphate isomerase.